The following is a 75-amino-acid chain: U6-lycotoxin-Ls1g (75 aa).

A signal peptide spans 1–21; it reads MKLLLFTALVLVVISLIEVEA. A propeptide spanning residues 22–25 is cleaved from the precursor; the sequence is ENER.

It belongs to the neurotoxin 19 (CSTX) family. 06 (U6-Lctx) subfamily. In terms of processing, contains 4 disulfide bonds. Expressed by the venom gland.

The protein resides in the secreted. This is U6-lycotoxin-Ls1g from Lycosa singoriensis (Wolf spider).